A 977-amino-acid polypeptide reads, in one-letter code: uncharacterized protein (977 aa).

Positions 100-152 are disordered; that stretch reads ATSPLQQNGKSRDTEKPPSMKEKDLSSNSSSQHDKAFHERVDQGKNKSSTTKY. Basic and acidic residues-rich tracts occupy residues 109 to 124 and 131 to 144; these read KSRDTEKPPSMKEKDL and QHDKAFHERVDQGK. Serine 165 is subject to Phosphoserine. Composition is skewed to polar residues over residues 166 to 175 and 183 to 193; these read PGQSVNSLKP and STKSSTSSEMH. Residues 166–194 form a disordered region; that stretch reads PGQSVNSLKPNSGDEVPSTKSSTSSEMHT.

This is an uncharacterized protein from Schizosaccharomyces pombe (strain 972 / ATCC 24843) (Fission yeast).